The following is a 340-amino-acid chain: Holliday junction branch migration complex subunit RuvB (340 aa).

Residues 4–184 (TDRIVGGQSL…FGIVQRLEFY (181 aa)) form a large ATPase domain (RuvB-L) region. ATP contacts are provided by residues Arg24, Gly65, Lys68, Thr69, Thr70, 131–133 (EDF), Arg174, Tyr184, and Arg221. Residue Thr69 participates in Mg(2+) binding. The segment at 185–255 (SIEELAQIVT…IADLALNLLE (71 aa)) is small ATPAse domain (RuvB-S). Residues 258 to 340 (PLGLDKMDRR…TMPERNLEDE (83 aa)) form a head domain (RuvB-H) region. DNA contacts are provided by Arg294, Arg313, and Arg318.

This sequence belongs to the RuvB family. Homohexamer. Forms an RuvA(8)-RuvB(12)-Holliday junction (HJ) complex. HJ DNA is sandwiched between 2 RuvA tetramers; dsDNA enters through RuvA and exits via RuvB. An RuvB hexamer assembles on each DNA strand where it exits the tetramer. Each RuvB hexamer is contacted by two RuvA subunits (via domain III) on 2 adjacent RuvB subunits; this complex drives branch migration. In the full resolvosome a probable DNA-RuvA(4)-RuvB(12)-RuvC(2) complex forms which resolves the HJ.

The protein resides in the cytoplasm. It catalyses the reaction ATP + H2O = ADP + phosphate + H(+). In terms of biological role, the RuvA-RuvB-RuvC complex processes Holliday junction (HJ) DNA during genetic recombination and DNA repair, while the RuvA-RuvB complex plays an important role in the rescue of blocked DNA replication forks via replication fork reversal (RFR). RuvA specifically binds to HJ cruciform DNA, conferring on it an open structure. The RuvB hexamer acts as an ATP-dependent pump, pulling dsDNA into and through the RuvAB complex. RuvB forms 2 homohexamers on either side of HJ DNA bound by 1 or 2 RuvA tetramers; 4 subunits per hexamer contact DNA at a time. Coordinated motions by a converter formed by DNA-disengaged RuvB subunits stimulates ATP hydrolysis and nucleotide exchange. Immobilization of the converter enables RuvB to convert the ATP-contained energy into a lever motion, pulling 2 nucleotides of DNA out of the RuvA tetramer per ATP hydrolyzed, thus driving DNA branch migration. The RuvB motors rotate together with the DNA substrate, which together with the progressing nucleotide cycle form the mechanistic basis for DNA recombination by continuous HJ branch migration. Branch migration allows RuvC to scan DNA until it finds its consensus sequence, where it cleaves and resolves cruciform DNA. The polypeptide is Holliday junction branch migration complex subunit RuvB (Hydrogenovibrio crunogenus (strain DSM 25203 / XCL-2) (Thiomicrospira crunogena)).